A 79-amino-acid chain; its full sequence is UPF0181 protein PC1_1931 (79 aa).

The segment at F54 to Q79 is disordered.

This sequence belongs to the UPF0181 family.

The polypeptide is UPF0181 protein PC1_1931 (Pectobacterium carotovorum subsp. carotovorum (strain PC1)).